The sequence spans 625 residues: Branchpoint-bridging protein (625 aa).

Residues 1 to 16 show a composition bias toward polar residues; it reads MSWRSNAQRTGMNAQP. Disordered stretches follow at residues 1–154 and 177–206; these read MSWR…AIGA and LRSGDFVPPDRERSPSPPPTYDNQGRRTNT. Over residues 22-31 the composition is skewed to gly residues; it reads RWGGAGGAGE. 3 stretches are compositionally biased toward low complexity: residues 32 to 61, 70 to 91, and 110 to 130; these read GPSSSGSPPSSYHQPSHPYQSSYSHQSQPY, SSSSSSSNPRDAALAAAAAVAA, and SYAAPSLLTSASTADGSGADA. Over residues 177 to 190 the composition is skewed to basic and acidic residues; that stretch reads LRSGDFVPPDRERS. Positions 253 to 330 constitute a KH domain; that stretch reads YLPIKEFPEI…ASVKKCIKLI (78 aa). 2 CCHC-type zinc fingers span residues 368 to 385 and 393 to 410; these read QLCKNCGNKGHRAFECPE and IICHRCGGQGHLARDCTQ. The segment at 466-533 is disordered; the sequence is GPDGKKIPPW…HAYHQQQQAY (68 aa). Over residues 488-503 the composition is skewed to gly residues; it reads APRGGDAGRGGWGHRG. Residues 516–533 show a composition bias toward low complexity; the sequence is QHQQQQHPHAYHQQQQAY.

The protein belongs to the BBP/SF1 family.

The protein localises to the nucleus. Necessary for the splicing of pre-mRNA. Has a role in the recognition of the branch site (5'-UACUAAC-3'), the pyrimidine tract and the 3'-splice site at the 3'-end of introns. This chain is Branchpoint-bridging protein (BBP), found in Mycosarcoma maydis (Corn smut fungus).